A 164-amino-acid chain; its full sequence is Ribosome maturation factor RimP (164 aa).

The protein belongs to the RimP family.

It localises to the cytoplasm. Required for maturation of 30S ribosomal subunits. The protein is Ribosome maturation factor RimP of Mesoplasma florum (strain ATCC 33453 / NBRC 100688 / NCTC 11704 / L1) (Acholeplasma florum).